Consider the following 240-residue polypeptide: Cysteine-rich venom protein (240 aa).

The N-terminal stretch at 1-19 (MIAFIVLPILAAVLQQSSG) is a signal peptide. The SCP domain occupies 39 to 166 (DLHNSLRRSV…EYSYFYVCQY (128 aa)). Intrachain disulfides connect cysteine 75–cysteine 153, cysteine 92–cysteine 167, cysteine 148–cysteine 164, cysteine 186–cysteine 193, cysteine 189–cysteine 198, cysteine 202–cysteine 235, cysteine 211–cysteine 229, and cysteine 220–cysteine 233. The ShKT domain maps to 202–235 (CRQENKFTNCDSLVRQSSCQDNYMKTNCPASCFC).

It belongs to the CRISP family. Expressed by the venom gland.

Its subcellular location is the secreted. Its function is as follows. Blocks contraction of smooth muscle elicited by high potassium-induced depolarization, but does not block caffeine-stimulated contraction. May target voltage-gated calcium channels on smooth muscle. The sequence is that of Cysteine-rich venom protein from Protobothrops jerdonii (Jerdon's pitviper).